We begin with the raw amino-acid sequence, 132 residues long: Holo-[acyl-carrier-protein] synthase (132 aa).

The Mg(2+) site is built by Asp8 and Glu57.

This sequence belongs to the P-Pant transferase superfamily. AcpS family. Requires Mg(2+) as cofactor.

It localises to the cytoplasm. The enzyme catalyses apo-[ACP] + CoA = holo-[ACP] + adenosine 3',5'-bisphosphate + H(+). Its function is as follows. Transfers the 4'-phosphopantetheine moiety from coenzyme A to a Ser of acyl-carrier-protein. The polypeptide is Holo-[acyl-carrier-protein] synthase (Methylobacterium nodulans (strain LMG 21967 / CNCM I-2342 / ORS 2060)).